A 477-amino-acid polypeptide reads, in one-letter code: NADH-quinone oxidoreductase subunit N (477 aa).

A run of 13 helical transmembrane segments spans residues 7–27 (VLAHALPELILAGGVLLLILI), 37–57 (GPMTELAVGLLGIAILTLVLG), 77–97 (FMKVLVLIGSLVSLIMGQTYL), 109–129 (ILILLSTLGMLMLISATGLIA), 162–182 (FVLGALSSGMLLYGASLIYGF), 201–221 (LGVVFGLVFLTAGLAFKMSTV), 233–253 (GAPTPVTAFFASAPKLAAIAI), 272–292 (IIVFISILSMALGSFAAIGQT), 297–317 (LMAYSSIGHMGFALVGLAAGT), 323–343 (GVLAYMAIYLVMTLGTFAAIL), 369–389 (AFFLAIMMFSLAGIPPLAGFF), 402–424 (HLYPLAVIGVLCSTVGAYYYLRI), and 446–466 (AVLIVTGLAVLLLCVYPGSFV).

The protein belongs to the complex I subunit 2 family. In terms of assembly, NDH-1 is composed of 14 different subunits. Subunits NuoA, H, J, K, L, M, N constitute the membrane sector of the complex.

The protein resides in the cell inner membrane. The enzyme catalyses a quinone + NADH + 5 H(+)(in) = a quinol + NAD(+) + 4 H(+)(out). NDH-1 shuttles electrons from NADH, via FMN and iron-sulfur (Fe-S) centers, to quinones in the respiratory chain. The immediate electron acceptor for the enzyme in this species is believed to be ubiquinone. Couples the redox reaction to proton translocation (for every two electrons transferred, four hydrogen ions are translocated across the cytoplasmic membrane), and thus conserves the redox energy in a proton gradient. This chain is NADH-quinone oxidoreductase subunit N, found in Beijerinckia indica subsp. indica (strain ATCC 9039 / DSM 1715 / NCIMB 8712).